Reading from the N-terminus, the 256-residue chain is Tryptophan synthase alpha chain (256 aa).

Catalysis depends on proton acceptor residues glutamate 46 and aspartate 57.

This sequence belongs to the TrpA family. Tetramer of two alpha and two beta chains.

The catalysed reaction is (1S,2R)-1-C-(indol-3-yl)glycerol 3-phosphate + L-serine = D-glyceraldehyde 3-phosphate + L-tryptophan + H2O. The protein operates within amino-acid biosynthesis; L-tryptophan biosynthesis; L-tryptophan from chorismate: step 5/5. Its function is as follows. The alpha subunit is responsible for the aldol cleavage of indoleglycerol phosphate to indole and glyceraldehyde 3-phosphate. The sequence is that of Tryptophan synthase alpha chain from Bacteroides thetaiotaomicron (strain ATCC 29148 / DSM 2079 / JCM 5827 / CCUG 10774 / NCTC 10582 / VPI-5482 / E50).